Here is a 441-residue protein sequence, read N- to C-terminus: Diuretic hormone receptor (441 aa).

N-linked (GlcNAc...) asparagine glycans are attached at residues N99, N107, and N112. A helical transmembrane segment spans residues 135-158; sequence FVFFVGFCLSLVAIAVAIWIFLYF. Over 159 to 166 the chain is Cytoplasmic; it reads KDLRCLRN. The chain crosses the membrane as a helical span at residues 167-187; that stretch reads TIHTNLMATYICNDATWIISA. Residues 188–194 are Extracellular-facing; it reads VVQEYVE. The helical transmembrane segment at 195 to 224 threads the bilayer; sequence NGGLCSVLAVLMHYFYLTNFFWMFVEGLYL. The Cytoplasmic segment spans residues 225–238; it reads FLLVVATFTGEKVK. The chain crosses the membrane as a helical span at residues 239–260; it reads LQIYIIIGWGIPGVIVVTWAII. The Extracellular portion of the chain corresponds to 261–291; sequence KHLGKTAPDNAGESHPMVLLIKHCPWMAEDY. A helical transmembrane segment spans residues 292 to 315; that stretch reads FDWIHQAPVITVLAVNLVFLFSIM. Topologically, residues 316 to 338 are cytoplasmic; sequence WVLITKLQSANTAETQQYRKATK. A helical membrane pass occupies residues 339–357; that stretch reads ALLVLFPLLGITYILMMQG. At 358 to 371 the chain is on the extracellular side; that stretch reads PMDGVAGHVFRNAQ. A helical transmembrane segment spans residues 372–391; that stretch reads ALLLSLQGFTVALFYCFLNT. Topologically, residues 392–441 are cytoplasmic; sequence EVQNTLRHRMSRWRETRTVGGGRRYTLSGHSKDWSPRSRTESIRCLQHRS.

Belongs to the G-protein coupled receptor 2 family. Expressed in Malpighian tubules.

It is found in the cell membrane. Functionally, receptor for the insect diurectic hormone. The activity of this receptor is mediated by G proteins which activate adenylyl cyclase. In Acheta domesticus (House cricket), this protein is Diuretic hormone receptor.